The chain runs to 281 residues: Transcription factor bHLH79 (281 aa).

The tract at residues 47-167 (FTRSEHSGNK…GQATDRHSLA (121 aa)) is disordered. 2 stretches are compositionally biased toward basic and acidic residues: residues 77 to 88 (KTRDLNSEDDSS) and 138 to 152 (TEQKNKPEPPKDYIH). One can recognise a bHLH domain in the interval 159 to 209 (QATDRHSLAERARREKISEKMTALQDIIPGCNKIIGKALVLDEIINYIQSL).

As to quaternary structure, homodimer.

It localises to the nucleus. The sequence is that of Transcription factor bHLH79 (BHLH79) from Arabidopsis thaliana (Mouse-ear cress).